Reading from the N-terminus, the 351-residue chain is uncharacterized protein (351 aa).

Positions 1–32 (MKNKKRVFIASSLSCVLLLLSAANTEANSANK) are cleaved as a signal peptide. The tract at residues 26-74 (EANSANKDSQDQTKKEHVDKAQQKEKRNVNDKDKNTPGPDDIGKNGKVT) is disordered. Basic and acidic residues predominate over residues 33–60 (DSQDQTKKEHVDKAQQKEKRNVNDKDKN).

The protein belongs to the aerolysin family.

This is an uncharacterized protein from Staphylococcus aureus (strain MRSA252).